A 236-amino-acid chain; its full sequence is Envelope glycoprotein (236 aa).

Topologically, residues C1–N202 are lumenal. N25 carries an N-linked (GlcNAc...) asparagine; by host glycan. Cystine bridges form between C67-C97, C90-C142, C107-C112, C143-C148, and C182-C186. The helical transmembrane segment at W203 to C223 threads the bilayer. 2 binding to the ribonucleoprotein regions span residues L219–R231 and L219–P236. At C224 to P236 the chain is on the cytoplasmic side.

The protein belongs to the hantavirus envelope glycoprotein family. In terms of assembly, homodimer. Homotetramer; forms heterotetrameric Gn-Gc spikes in the pre-fusion conformation. Homotrimer; forms homotrimer in the post-fusion conformation at acidic pH. Interacts (via C-terminus) with the nucleoprotein. Post-translationally, envelope polyprotein precursor is quickly cleaved in vivo just after synthesis, presumably by host signal peptidase.

The protein resides in the virion membrane. It is found in the host cell surface. Its subcellular location is the host Golgi apparatus membrane. It localises to the host endoplasmic reticulum membrane. Forms homotetramers with glycoprotein N at the surface of the virion. Attaches the virion to host cell receptors including integrin ITGAV/ITGB3. This attachment induces virion internalization predominantly through clathrin-dependent endocytosis. Class II fusion protein that promotes fusion of viral membrane with host endosomal membrane after endocytosis of the virion. In Homo sapiens (Human), this protein is Envelope glycoprotein (GP).